The following is a 107-amino-acid chain: UPF0235 protein RPC_0058 (107 aa).

This sequence belongs to the UPF0235 family.

The polypeptide is UPF0235 protein RPC_0058 (Rhodopseudomonas palustris (strain BisB18)).